Consider the following 470-residue polypeptide: Cysteine--tRNA ligase (470 aa).

Zn(2+) is bound at residue Cys-27. A 'HIGH' region motif is present at residues 29-39 (PTVYNYIHIGN). Cys-207, His-232, and Glu-236 together coordinate Zn(2+). Residues 264–268 (KMSKS) carry the 'KMSKS' region motif. Lys-267 is an ATP binding site.

It belongs to the class-I aminoacyl-tRNA synthetase family. As to quaternary structure, monomer. It depends on Zn(2+) as a cofactor.

The protein localises to the cytoplasm. It carries out the reaction tRNA(Cys) + L-cysteine + ATP = L-cysteinyl-tRNA(Cys) + AMP + diphosphate. This Lachnoclostridium phytofermentans (strain ATCC 700394 / DSM 18823 / ISDg) (Clostridium phytofermentans) protein is Cysteine--tRNA ligase.